Reading from the N-terminus, the 446-residue chain is MVKHAVEANFDGLVGPTHNYAGLSWGNVASKSNVNAVANPREAALQGLAKMKRLADRGYVQGILPPHERPHIPTLRALGFEGNERQILEAVAKADPTILAAVSSASCMWTANAATVSPSADTADHRVHFTPANLSAKFHRSIEHQVTGRSLKAIFGDESYFAHHPALPSVSHFGDEGAANHTRLCSRYGEPGVELFVYGQVAFNESAPAPGKYPARQTLEASRAIARLHGLTDRHAVFAQQNPAAIDAGVFHNDVIAVGNGNCLFYHEQAFLDEARVLADIQERLTGAELEAVRVSSTQVPIEDAVASYLFNSQLLNTADGMLLAVPGECREVASVSRYLDELVKADTPITAVEVFDVKQSMRNGGGPACLRLRVVLNDDELHAINRGVILTDALYERLTSWVEAHYRDQLSQQDLADPMLLEEVRKALDELTGILGLGSIYDFQL.

Substrate is bound by residues 21 to 30, Asn112, and 139 to 140; these read AGLSWGNVAS and HR. Glu176 is an active-site residue. Residue Arg216 coordinates substrate. His252 is an active-site residue. The substrate site is built by Asp254 and Asn364. The active-site Nucleophile is the Cys370.

This sequence belongs to the succinylarginine dihydrolase family. As to quaternary structure, homodimer.

It catalyses the reaction N(2)-succinyl-L-arginine + 2 H2O + 2 H(+) = N(2)-succinyl-L-ornithine + 2 NH4(+) + CO2. Its pathway is amino-acid degradation; L-arginine degradation via AST pathway; L-glutamate and succinate from L-arginine: step 2/5. Catalyzes the hydrolysis of N(2)-succinylarginine into N(2)-succinylornithine, ammonia and CO(2). This Marinobacter nauticus (strain ATCC 700491 / DSM 11845 / VT8) (Marinobacter aquaeolei) protein is N-succinylarginine dihydrolase.